A 340-amino-acid chain; its full sequence is DNA-directed RNA polymerase subunit alpha (340 aa).

The interval 1–236 (MLSLSKNWNT…EQLQLFIAFE (236 aa)) is alpha N-terminal domain (alpha-NTD). Residues 251 to 340 (FSPYLLKRVD…LSKRYEDSYN (90 aa)) are alpha C-terminal domain (alpha-CTD).

It belongs to the RNA polymerase alpha chain family. In terms of assembly, homodimer. The RNAP catalytic core consists of 2 alpha, 1 beta, 1 beta' and 1 omega subunit. When a sigma factor is associated with the core the holoenzyme is formed, which can initiate transcription.

The catalysed reaction is RNA(n) + a ribonucleoside 5'-triphosphate = RNA(n+1) + diphosphate. Functionally, DNA-dependent RNA polymerase catalyzes the transcription of DNA into RNA using the four ribonucleoside triphosphates as substrates. The polypeptide is DNA-directed RNA polymerase subunit alpha (Rickettsia prowazekii (strain Madrid E)).